We begin with the raw amino-acid sequence, 469 residues long: MVSLLWKFTLLCLFLLACTSAEVLERSSKPQTPDKDPFYDPPSGWEEKEHGTILRSRKVDIAFFQIAKVKYKEAYEILYRTSRSEEDQPSTTVTTVIVPENAKKDKLVNMNVYVDSNGARCAPSYVLQRNAKLATDPALSYQQVLFSTILDEGYILTVPDYQGPKRAFAAGRLEGHMAIDGILATLNLKELCLSKDTKVIGYGYSGGSIATGWAASLQPSYAPNLNMVGWTFGGTPANLTSTLEHLNGGTPAGFAVSGVAGIVDEYESVADWINDKLTHKGKHALDFVREHCTVGIVLRYPFTNILSDSFMKHGAQLLQSPIMKKVLGTLNMGVRPDETPKAPVYMFHAKLDEVIPYGSAHDAAKRWGDHGADILFEEFTGLVMGHASTELLNLPNVLLFMRDRMSGKPFIHGYEHKHTDNPLEDPGVIAKGFDALAETIKNAIDNTVGMGDKHMKAKIEQSRRRRIVS.

An N-terminal signal peptide occupies residues 1-21; that stretch reads MVSLLWKFTLLCLFLLACTSA. Residues Cys-121 and Cys-292 are joined by a disulfide bond. Ser-205 serves as the catalytic Nucleophile. Asn-238 is a glycosylation site (N-linked (GlcNAc...) asparagine). Active-site residues include Asp-352 and His-386.

It belongs to the AB hydrolase superfamily. Lipase family. Class Lip subfamily.

It is found in the secreted. The enzyme catalyses a triacylglycerol + H2O = a diacylglycerol + a fatty acid + H(+). It catalyses the reaction a monoacylglycerol + H2O = glycerol + a fatty acid + H(+). It carries out the reaction a diacylglycerol + H2O = a monoacylglycerol + a fatty acid + H(+). In terms of biological role, secreted lipase that hydrolyzes acylglycerol lipids such as triacylglycerols and consequently releases free fatty acid. Generates free oleic acid from the substrates mono- and diolein and hydrolyzes triolein in significant amounts. Due to an absence of fatty acid synthase genes in Malassezia species, secretory lipases are essential for the yeast to generate free fatty acids from degradation of sebum and assimilate them as lipid sources for growth. Plays an essential role at the pathogen-host interface during disease progression. Performs also the reverse reaction to build diacyl- and triacyl- glycerols from monoacylglycerols. The protein is Secreted triacylglycerol lipase LIP3 of Malassezia restricta (strain ATCC 96810 / NBRC 103918 / CBS 7877) (Seborrheic dermatitis infection agent).